Here is a 69-residue protein sequence, read N- to C-terminus: Chondroitin proteoglycan 9 (69 aa).

A signal peptide spans 1 to 19 (MHLWQLVLLVILFFGAAFG). Ser-25 and Ser-27 each carry an O-linked (Xyl...) (chondroitin sulfate) serine glycan.

The polypeptide is Chondroitin proteoglycan 9 (Caenorhabditis elegans).